Reading from the N-terminus, the 350-residue chain is Ferredoxin--NADP reductase (350 aa).

FAD contacts are provided by T25, E44, Q52, Y57, V97, F132, D298, and S339.

It belongs to the ferredoxin--NADP reductase type 2 family. In terms of assembly, homodimer. FAD is required as a cofactor.

The catalysed reaction is 2 reduced [2Fe-2S]-[ferredoxin] + NADP(+) + H(+) = 2 oxidized [2Fe-2S]-[ferredoxin] + NADPH. This chain is Ferredoxin--NADP reductase, found in Chlorobium limicola (strain DSM 245 / NBRC 103803 / 6330).